A 587-amino-acid polypeptide reads, in one-letter code: UDP-N-acetylmuramoylalanine--D-glutamate ligase (587 aa).

The interval 124 to 147 (DHLVPPESPLSDASDISDASDATD) is disordered. Over residues 132–147 (PLSDASDISDASDATD) the composition is skewed to low complexity. 214–220 (GTNGKTT) provides a ligand contact to ATP.

It belongs to the MurCDEF family.

The protein localises to the cytoplasm. It catalyses the reaction UDP-N-acetyl-alpha-D-muramoyl-L-alanine + D-glutamate + ATP = UDP-N-acetyl-alpha-D-muramoyl-L-alanyl-D-glutamate + ADP + phosphate + H(+). Its pathway is cell wall biogenesis; peptidoglycan biosynthesis. Its function is as follows. Cell wall formation. Catalyzes the addition of glutamate to the nucleotide precursor UDP-N-acetylmuramoyl-L-alanine (UMA). The polypeptide is UDP-N-acetylmuramoylalanine--D-glutamate ligase (Polaromonas sp. (strain JS666 / ATCC BAA-500)).